A 99-amino-acid polypeptide reads, in one-letter code: Putative endopeptidase RzpR (99 aa).

The sequence is that of Putative endopeptidase RzpR (rzpR) from Escherichia coli (strain K12).